A 1086-amino-acid chain; its full sequence is NAD(P) transhydrogenase, mitochondrial (1086 aa).

The transit peptide at 1-43 directs the protein to the mitochondrion; the sequence is MANLLKTVVTGCSCPLLSNLGSCKGLRVKKDFLRTFYTHQELW. Residues 44-474 lie on the Mitochondrial matrix side of the membrane; the sequence is CKAPVKPGIP…TITPFRKTMS (431 aa). Lys-70 carries the post-translational modification N6-acetyllysine. Lys-117 carries the post-translational modification N6-succinyllysine. 182–184 contributes to the NAD(+) binding site; that stretch reads RVT. Lys-224 is modified (N6-succinyllysine). NAD(+) contacts are provided by residues Val-237, 257–259, and Gly-287; that span reads DTR. Lys-294 carries the post-translational modification N6-succinyllysine. Residues Glu-300 and Leu-319 each coordinate NAD(+). Lys-331 is subject to N6-succinyllysine. Position 397 is an N6-acetyllysine (Lys-397). Transmembrane regions (helical) follow at residues 475–493, 501–521, 527–546, and 558–578; these read TASA…GIAA, MVTT…GVTP, LMSV…LALM, and GLAA…FLVT. The Mitochondrial matrix segment spans residues 579-595; the sequence is QRMLDMFKRPTDPPEYN. 5 helical membrane-spanning segments follow: residues 596–616, 622–642, 646–666, 672–691, and 702–722; these read YLYL…LYSG, IMYL…STQG, LGNA…LGVL, LLAQ…LTIA, and LVAA…IAEY. At 723–739 the chain is on the cytoplasmic side; it reads IIEYPHFATDAAANLTK. 5 helical membrane passes run 740–760, 778–797, 801–819, 833–853, and 857–879; these read IVAY…LIAY, HLLN…PFMV, FTTG…AVMG, VVIT…GFLL, and LLTI…MCVA. Over 880 to 1086 the chain is Mitochondrial matrix; that stretch reads MNRSLANVIL…QAKVRESYQK (207 aa). NADP(+)-binding positions include Tyr-933, 965-970, 1007-1011, 1026-1027, 1042-1049, and 1068-1069; these read VAGRMP, GANDT, GM, KRSLGVGY, and DA. Lys-1079 carries the post-translational modification N6-succinyllysine.

In the N-terminal section; belongs to the AlaDH/PNT family. It in the C-terminal section; belongs to the PNT beta subunit family. Homodimer. As to expression, widely expressed with expression most readily detectable in adrenal, heart, kidney, thyroid and adipose tissues.

The protein resides in the mitochondrion inner membrane. It catalyses the reaction NAD(+) + NADPH + H(+)(in) = NADH + NADP(+) + H(+)(out). Functionally, the transhydrogenation between NADH and NADP is coupled to respiration and ATP hydrolysis and functions as a proton pump across the membrane. May play a role in reactive oxygen species (ROS) detoxification in the adrenal gland. The protein is NAD(P) transhydrogenase, mitochondrial (NNT) of Homo sapiens (Human).